Consider the following 296-residue polypeptide: 4-hydroxybenzoate octaprenyltransferase (296 aa).

The next 8 membrane-spanning stretches (helical) occupy residues 22–42 (PIGILLLLWPTLWALWLSALG), 46–66 (WIVVWIFILGTVLMRSAGCVI), 99–121 (LFAGLSLLSFLLVVFLGNTLVIW), 139–159 (FFAIPQAYLGVAFGFGIPMAY), 163–183 (LGEVPAEAWWLLLANVFWAVA), 211–231 (FDVAAVMLCYGVTLAIIGGIG), 238–258 (PAFYAGLAVATCIMGVHYTWI), and 270–290 (FLHNNWVGLSIFVGIVVDFLV).

Belongs to the UbiA prenyltransferase family. Requires Mg(2+) as cofactor.

The protein resides in the cell inner membrane. The catalysed reaction is all-trans-octaprenyl diphosphate + 4-hydroxybenzoate = 4-hydroxy-3-(all-trans-octaprenyl)benzoate + diphosphate. Its pathway is cofactor biosynthesis; ubiquinone biosynthesis. Catalyzes the prenylation of para-hydroxybenzoate (PHB) with an all-trans polyprenyl group. Mediates the second step in the final reaction sequence of ubiquinone-8 (UQ-8) biosynthesis, which is the condensation of the polyisoprenoid side chain with PHB, generating the first membrane-bound Q intermediate 3-octaprenyl-4-hydroxybenzoate. The polypeptide is 4-hydroxybenzoate octaprenyltransferase (Dechloromonas aromatica (strain RCB)).